Here is a 308-residue protein sequence, read N- to C-terminus: Lysophosphatidic acid receptor 6 (308 aa).

Residues 1-16 are Extracellular-facing; that stretch reads MVSSNCSTEDSFKYTL. An N-linked (GlcNAc...) asparagine glycan is attached at asparagine 5. The chain crosses the membrane as a helical span at residues 17–43; that stretch reads YGCVFSMVFVLGLIANCVAIYIFTFTL. At 44-52 the chain is on the cytoplasmic side; sequence KVRNETTTY. A helical membrane pass occupies residues 53–76; the sequence is MLNLAISDLLFVFTLPFRIYYFVV. Residues 77–89 lie on the Extracellular side of the membrane; it reads RNWPFGDVLCKIS. Cysteine 86 and cysteine 165 are oxidised to a cystine. The helical transmembrane segment at 90–109 threads the bilayer; it reads VTLFYTNMYGSILFLTCISV. Residues 110-130 lie on the Cytoplasmic side of the membrane; that stretch reads DRFLAIVHPFRSKTLRTKRNA. Residues 131–151 traverse the membrane as a helical segment; sequence RIVCVAVWITVLAGSTPASFF. At 152 to 178 the chain is on the extracellular side; the sequence is QSTNRQNNTEQRTCFENFPESTWKTYL. A helical membrane pass occupies residues 179–206; it reads SRIVIFIEIVGFFIPLILNVTCSTMVLR. Topologically, residues 207–224 are cytoplasmic; that stretch reads TLNKPLTLSRNKLSKKKV. The helical transmembrane segment at 225–250 threads the bilayer; sequence LKMIFVHLVIFCFCFVPYNITLILYS. Residues 251 to 269 lie on the Extracellular side of the membrane; the sequence is LMRTQTWINCSVVTAVRTM. The chain crosses the membrane as a helical span at residues 270–289; the sequence is YPVTLCIAVSNCCFDPIVYY. Cysteine 281 carries the S-palmitoyl cysteine lipid modification. The Cytoplasmic segment spans residues 290–308; the sequence is FTSDTNSELDKKQQVHQNT.

Belongs to the G-protein coupled receptor 1 family. As to expression, induced in activated T-cells.

It is found in the cell membrane. In terms of biological role, binds to oleoyl-L-alpha-lysophosphatidic acid (LPA). Intracellular cAMP is involved in the receptor activation. This Gallus gallus (Chicken) protein is Lysophosphatidic acid receptor 6 (LPAR6).